The chain runs to 324 residues: Probable peptidylglycine alpha-hydroxylating monooxygenase 1 (324 aa).

The signal sequence occupies residues 1-22 (MPRFYLLSSCALLAFATSFCNA). 2 disulfide bridges follow: C41/C85 and C73/C101. Positions 66 and 67 each coordinate Cu cation. H142 provides a ligand contact to Cu cation. The N-linked (GlcNAc...) asparagine glycan is linked to N182. The Cu cation site is built by H207, H209, and M284. A disulfide bond links C264 and C285.

It belongs to the copper type II ascorbate-dependent monooxygenase family. The cofactor is Cu(2+).

Its subcellular location is the secreted. It catalyses the reaction a [peptide]-C-terminal glycine + 2 L-ascorbate + O2 = a [peptide]-C-terminal (2S)-2-hydroxyglycine + 2 monodehydro-L-ascorbate radical + H2O. In terms of biological role, monooxygenase that catalyzes an essential reaction in C-terminal alpha-amidation of peptides. Produces an unstable peptidyl(2-hydroxyglycine) intermediate. C-terminal amidation of peptides such as neuropeptides is essential for full biological activity. The chain is Probable peptidylglycine alpha-hydroxylating monooxygenase 1 from Caenorhabditis elegans.